The chain runs to 179 residues: Large ribosomal subunit protein uL5 (179 aa).

It belongs to the universal ribosomal protein uL5 family. Part of the 50S ribosomal subunit; part of the 5S rRNA/L5/L18/L25 subcomplex. Contacts the 5S rRNA and the P site tRNA. Forms a bridge to the 30S subunit in the 70S ribosome.

Functionally, this is one of the proteins that bind and probably mediate the attachment of the 5S RNA into the large ribosomal subunit, where it forms part of the central protuberance. In the 70S ribosome it contacts protein S13 of the 30S subunit (bridge B1b), connecting the 2 subunits; this bridge is implicated in subunit movement. Contacts the P site tRNA; the 5S rRNA and some of its associated proteins might help stabilize positioning of ribosome-bound tRNAs. This chain is Large ribosomal subunit protein uL5, found in Carboxydothermus hydrogenoformans (strain ATCC BAA-161 / DSM 6008 / Z-2901).